We begin with the raw amino-acid sequence, 137 residues long: Large ribosomal subunit protein uL16 (137 aa).

This sequence belongs to the universal ribosomal protein uL16 family. In terms of assembly, part of the 50S ribosomal subunit.

Functionally, binds 23S rRNA and is also seen to make contacts with the A and possibly P site tRNAs. This Cereibacter sphaeroides (strain ATCC 17025 / ATH 2.4.3) (Rhodobacter sphaeroides) protein is Large ribosomal subunit protein uL16.